Consider the following 977-residue polypeptide: MMQQRSGSLSLLSNAVQAGQSSDPMQDDPAKTEPGTPKGYDGSKNSSPASVPSWIHEKTKAGKDRKRLPLACQSCRKKKVKCSGERPSCDQCLKHNIPCIYKSNSTKRSHSRHEEIHHQQQLHLNHQYQHQHKNVAANSIDNLSRQYSQPNHINTHDSVNSPPSYGIMASATNQPLSHPTIVPSSNSSSLLNSTNNISHNPQVSLMSASLSKNLVLDPASPKSVSPDLVYVSSDNPPVSTAASAYSSSLPISDVTRALPLAPASNSQHPSLSSQPVSVPSNTINIPTDSLSIVSNPSQTPAKFDSNRISQVPNSDYSIYSNFNNFPIANHAPSFPQSSVKKLDSSFSPTSLPTFTTNSASSGLSTSYTNNNDTTSDNNSLQAVPRLDPVPSLTLSSTPVAELPPLELRIHLAEVFFHCCHGQSYNLFHRPTFFESLNNNTVPLVVVYAVCAVSARFSSRMHDRFSPPYMAGEQYAREARRLALDNFDRPDLSLVAALLLLSLHDSGTCETGKSWMYGGMALRMAAALQLNCEQGSNPLDLDNIDSGPRISFLERELRRRTFWSCFLMDRYASSHEHLQFLDENDIGIQLPVHELLFTKQIAGVTQTLDGRILEGVPSIVIPADTTENMGVAAYTVKIIALWGRAVKYLKQDGKRRDPYPYWHRNSDFSHISEALYAWADGLPQRLKYSAVGLENHLSIQQGAQYAFLHLAYHHTLMWLFRSIGETENNQLSKISSSVSLAGNTVSFSPVSHTPINVTNGESQNNSNNDPSANGAARRLHKAAREICLRCANAISMIVDDCRKHNVILTSPFIASGVYTAFCVQAEAAFGSNVLAASTARHNLEIDLRLMLEMKNYWGSISALCDKMSEIWADWVQRTSSGIQEEDTIPNEMIDEERMLDLEKHFMYITESPIVPNQAAQKSYSPDLMSYFGFAKNSDLQQWNGLWPSDDLRNYQESTIDSLVAYATGNPGWNISFAG.

Polar residues predominate over residues 1-24 (MMQQRSGSLSLLSNAVQAGQSSDP). The disordered stretch occupies residues 1–65 (MMQQRSGSLS…HEKTKAGKDR (65 aa)). The segment at residues 72–99 (CQSCRKKKVKCSGERPSCDQCLKHNIPC) is a DNA-binding region (zn(2)-C6 fungal-type). The tract at residues 176 to 195 (LSHPTIVPSSNSSSLLNSTN) is disordered. The segment covering 177-195 (SHPTIVPSSNSSSLLNSTN) has biased composition (low complexity). Phosphoserine is present on Ser-220. Disordered stretches follow at residues 287-307 (TDSL…DSNR), 357-380 (NSAS…NNSL), and 751-774 (HTPI…ANGA). The span at 364–379 (STSYTNNNDTTSDNNS) shows a compositional bias: low complexity. Positions 751 to 770 (HTPINVTNGESQNNSNNDPS) are enriched in polar residues.

Its subcellular location is the cytoplasm. It localises to the nucleus. This is an uncharacterized protein from Schizosaccharomyces pombe (strain 972 / ATCC 24843) (Fission yeast).